The sequence spans 993 residues: Synaptonemal complex protein 1 (993 aa).

The Mediates head to head self-assembly of N-terminal ends signature appears at 98–108 (PMSRLYSKLYK). The Nuclear localization signal motif lies at 114–117 (KKWK). 2 coiled-coil regions span residues 117–172 (KVSI…LIKE) and 215–688 (IEKM…EIEN). Residues 203 to 359 (ETRQVYVDLN…SQLTEVKEAQ (157 aa)) form an interaction with SYCE3 region. The required for pH-induced assembly of C-terminal ends into antiparallel tetramers stretch occupies residues 694-788 (GKLLGEVEKA…VSLKKQLEIE (95 aa)). The Nuclear localization signal signature appears at 697-700 (LGEV). A coiled-coil region spans residues 764–808 (KIALETELSNIRNELVSLKKQLEIEKEEKEKLKMAKENTAILKDK). The DNA-binding stretch occupies residues 801 to 993 (NTAILKDKKD…RLKEAEKLFS (193 aa)). S820 is modified (phosphoserine). The disordered stretch occupies residues 824–861 (TSWKFDSKTTPSQNISRLSSSMDSGKSKDNRDNLRASA). Positions 831-847 (KTTPSQNISRLSSSMDS) are enriched in polar residues. Residues 848-857 (GKSKDNRDNL) are compositionally biased toward basic and acidic residues. The Nuclear localization signal motif lies at 898-901 (KKRK).

Structural component of synaptonemal complexes. Homotetramer that consists of an N-terminal four-helical bundle that bifurcates into two elongated C-terminal dimeric coiled coils. This tetrameric building block potentially self-assembles into a supramolecular zipper-like lattice to mediate meiotic chromosome synapsis. Self-assembly is likely initiated by local proton density at chromosome axis, which is predicted to trigger antiparallel back to back assembly of adjacent C-terminal ends into tetrameric structures that anchor to chromosomal DNA. Then the N-terminal ends are predicted to undergo cooperative antiparallel head to head assembly at the midline of synaptonemal complexes central element to form a zipper-like lattice between properly aligned homologous chromosomes. The nascent synapsis generated by SYCP1 is stabilized through interaction with central element proteins SYCE1 and SYCE2. Interacts (via tetrameric core) with SYCE3; the interaction remodels SYCP1 homotetramers to 2:1 heterotrimers with SYCE3. SYCP1/SYCE3 heterotrimers form lattice assemblies as part of the mature synaptonemal complex via both lateral and head-to-head interactions. Forms a complex with EWSR1, PRDM9, SYCP3 and REC8; complex formation is dependent of phosphorylated form of REC8 and requires PRDM9 bound to hotspot DNA; EWSR1 joins PRDM9 with the chromosomal axis through REC8. Interacts with SPO16. Detected in testis. Detected in spermatocytes (at protein level).

The protein localises to the nucleus. The protein resides in the chromosome. It localises to the centromere. Major component of the transverse filaments of synaptonemal complexes, formed between homologous chromosomes during meiotic prophase. Required for normal assembly of the central element of the synaptonemal complexes. Required for normal centromere pairing during meiosis. Required for normal meiotic chromosome synapsis during oocyte and spermatocyte development and for normal male and female fertility. This Mus musculus (Mouse) protein is Synaptonemal complex protein 1.